Consider the following 226-residue polypeptide: 3-dehydroquinate dehydratase (226 aa).

Residues 30 to 32 (EWR) and R62 each bind 3-dehydroquinate. The Proton donor/acceptor role is filled by H118. Residue K143 is the Schiff-base intermediate with substrate of the active site. 3 residues coordinate 3-dehydroquinate: R186, S205, and Q209.

It belongs to the type-I 3-dehydroquinase family. As to quaternary structure, homodimer.

It carries out the reaction 3-dehydroquinate = 3-dehydroshikimate + H2O. It functions in the pathway metabolic intermediate biosynthesis; chorismate biosynthesis; chorismate from D-erythrose 4-phosphate and phosphoenolpyruvate: step 3/7. Involved in the third step of the chorismate pathway, which leads to the biosynthesis of aromatic amino acids. Catalyzes the cis-dehydration of 3-dehydroquinate (DHQ) and introduces the first double bond of the aromatic ring to yield 3-dehydroshikimate. The polypeptide is 3-dehydroquinate dehydratase (Streptococcus equi subsp. zooepidemicus (strain H70)).